Reading from the N-terminus, the 256-residue chain is 5-oxoprolinase subunit A (256 aa).

It belongs to the LamB/PxpA family. In terms of assembly, forms a complex composed of PxpA, PxpB and PxpC.

The catalysed reaction is 5-oxo-L-proline + ATP + 2 H2O = L-glutamate + ADP + phosphate + H(+). Its function is as follows. Catalyzes the cleavage of 5-oxoproline to form L-glutamate coupled to the hydrolysis of ATP to ADP and inorganic phosphate. This chain is 5-oxoprolinase subunit A, found in Alkaliphilus metalliredigens (strain QYMF).